Here is a 460-residue protein sequence, read N- to C-terminus: Cyclic 2,3-diphosphoglycerate synthetase (460 aa).

As to quaternary structure, homodimer.

The protein localises to the cytoplasm. The enzyme catalyses (2R)-2,3-bisphosphoglycerate + ATP + H(+) = cyclic (2R)-2,3-bisphosphoglycerate + ADP + phosphate. Functionally, catalyzes the formation of cyclic 2,3-diphosphoglycerate (cDPG) by formation of an intramolecular phosphoanhydride bond at the expense of ATP. It is also able to catalyze the hydrolysis of cDPG but with significant slower rates (8-10 times). May be involved in thermoadaptation. This is Cyclic 2,3-diphosphoglycerate synthetase (cpgS) from Methanothermus fervidus (strain ATCC 43054 / DSM 2088 / JCM 10308 / V24 S).